A 51-amino-acid polypeptide reads, in one-letter code: Large ribosomal subunit protein eL39 (51 aa).

It belongs to the eukaryotic ribosomal protein eL39 family.

This Pyrococcus abyssi (strain GE5 / Orsay) protein is Large ribosomal subunit protein eL39 (rpl39e).